Consider the following 131-residue polypeptide: Large-conductance mechanosensitive channel (131 aa).

3 helical membrane-spanning segments follow: residues 8–28 (FAIR…GAFG), 30–50 (IVSS…LGGI), and 67–87 (GAFI…FLFV).

Belongs to the MscL family. As to quaternary structure, homopentamer.

The protein resides in the cell membrane. Its function is as follows. Channel that opens in response to stretch forces in the membrane lipid bilayer. May participate in the regulation of osmotic pressure changes within the cell. The sequence is that of Large-conductance mechanosensitive channel from Geobacillus kaustophilus (strain HTA426).